The primary structure comprises 198 residues: Recombination protein RecR (198 aa).

The C4-type zinc-finger motif lies at 57 to 72 (CSICGHITDQDPCYIC). The Toprim domain occupies 80 to 175 (SVICVVQDPK…KLSRIAHGLP (96 aa)).

The protein belongs to the RecR family.

Its function is as follows. May play a role in DNA repair. It seems to be involved in an RecBC-independent recombinational process of DNA repair. It may act with RecF and RecO. The polypeptide is Recombination protein RecR (Bacillus velezensis (strain DSM 23117 / BGSC 10A6 / LMG 26770 / FZB42) (Bacillus amyloliquefaciens subsp. plantarum)).